The chain runs to 379 residues: Cytochrome b (379 aa).

8 helical membrane-spanning segments follow: residues 33–53 (FGSLLGLCLLIQILTGLFLAM), 77–98 (WLIRYMHANGASMFFICLFLHV), 113–133 (WNIGVILLFAVMATAFMGYVL), 178–198 (FFAFHFILPFIVAALVMVHLL), 226–246 (IKDVLGVLLLLLLFMMLVLFS), 288–308 (LGGVLALVFSILILMLFPILH), 320–340 (LSQCLFWILVADLFTLTWIGG), and 347–367 (FITIGQVASILYFTIILLALP). Heme b is bound by residues His-83 and His-97. Residues His-182 and His-196 each coordinate heme b.

This sequence belongs to the cytochrome b family. In terms of assembly, the cytochrome bc1 complex contains 11 subunits: 3 respiratory subunits (MT-CYB, CYC1 and UQCRFS1), 2 core proteins (UQCRC1 and UQCRC2) and 6 low-molecular weight proteins (UQCRH/QCR6, UQCRB/QCR7, UQCRQ/QCR8, UQCR10/QCR9, UQCR11/QCR10 and a cleavage product of UQCRFS1). This cytochrome bc1 complex then forms a dimer. Heme b is required as a cofactor.

It localises to the mitochondrion inner membrane. In terms of biological role, component of the ubiquinol-cytochrome c reductase complex (complex III or cytochrome b-c1 complex) that is part of the mitochondrial respiratory chain. The b-c1 complex mediates electron transfer from ubiquinol to cytochrome c. Contributes to the generation of a proton gradient across the mitochondrial membrane that is then used for ATP synthesis. This Sciurus niger (Eastern fox squirrel) protein is Cytochrome b (MT-CYB).